Reading from the N-terminus, the 356-residue chain is Sterol-4-alpha-carboxylate 3-dehydrogenase, decarboxylating (356 aa).

Residue Met1 is modified to N-acetylmethionine. The active-site Proton acceptor is the Tyr155. Position 159 (Lys159) interacts with NAD(+). The helical transmembrane segment at 281 to 301 (WLAYYLALLVSLLVMVISPVI) threads the bilayer. A Prevents secretion from ER motif is present at residues 353-356 (RKVM).

It belongs to the 3-beta-HSD family. In terms of assembly, homodimer.

It localises to the endoplasmic reticulum membrane. Its subcellular location is the lipid droplet. The enzyme catalyses a 3beta-hydroxysteroid-4alpha-carboxylate + NADP(+) = a 3-oxosteroid + CO2 + NADPH. The catalysed reaction is a 3beta-hydroxysteroid-4alpha-carboxylate + NAD(+) = a 3-oxosteroid + CO2 + NADH. It catalyses the reaction 4alpha-carboxyzymosterol + NADP(+) = zymosterone + CO2 + NADPH. It carries out the reaction 4alpha-carboxy-4beta-methyl-5alpha-cholest-8-en-3beta-ol + NADP(+) = 4alpha-methyl-5alpha-cholest-8-en-3-one + CO2 + NADPH. The enzyme catalyses 4alpha-carboxy-5alpha-cholest-8-ene-3beta-ol + NADP(+) = 5alpha-cholest-8-en-3-one + CO2 + NADPH. The catalysed reaction is 4beta-methylzymosterol-4alpha-carboxylate + NADP(+) = 3-dehydro-4-methylzymosterol + CO2 + NADPH. It catalyses the reaction 4beta-methylzymosterol-4alpha-carboxylate + NAD(+) = 3-dehydro-4-methylzymosterol + CO2 + NADH. It carries out the reaction 4alpha-carboxy-5alpha-cholest-8-ene-3beta-ol + NAD(+) = 5alpha-cholest-8-en-3-one + CO2 + NADH. The enzyme catalyses 4alpha-carboxy-4beta-methyl-5alpha-cholest-8-en-3beta-ol + NAD(+) = 4alpha-methyl-5alpha-cholest-8-en-3-one + CO2 + NADH. The catalysed reaction is 4alpha-carboxyzymosterol + NAD(+) = zymosterone + CO2 + NADH. It participates in steroid biosynthesis; zymosterol biosynthesis; zymosterol from lanosterol: step 4/6. Its function is as follows. Catalyzes the NAD(P)(+)-dependent oxidative decarboxylation of the C4 methyl groups of 4-alpha-carboxysterols in post-squalene cholesterol biosynthesis. Also plays a role in the regulation of the endocytic trafficking of EGFR. The chain is Sterol-4-alpha-carboxylate 3-dehydrogenase, decarboxylating (NSDHL) from Bos taurus (Bovine).